A 309-amino-acid polypeptide reads, in one-letter code: Coproporphyrin III ferrochelatase (309 aa).

Fe-coproporphyrin III is bound by residues tyrosine 12, arginine 29, 45-46 (RY), serine 53, and tyrosine 124. Positions 182 and 263 each coordinate Fe(2+).

This sequence belongs to the ferrochelatase family.

Its subcellular location is the cytoplasm. It carries out the reaction Fe-coproporphyrin III + 2 H(+) = coproporphyrin III + Fe(2+). The protein operates within porphyrin-containing compound metabolism; protoheme biosynthesis. In terms of biological role, involved in coproporphyrin-dependent heme b biosynthesis. Catalyzes the insertion of ferrous iron into coproporphyrin III to form Fe-coproporphyrin III. The sequence is that of Coproporphyrin III ferrochelatase from Listeria monocytogenes serotype 4b (strain F2365).